Reading from the N-terminus, the 192-residue chain is Peptide deformylase (192 aa).

The Fe cation site is built by Cys-102 and His-145. Glu-146 is an active-site residue. His-149 is a binding site for Fe cation.

Belongs to the polypeptide deformylase family. Fe(2+) serves as cofactor.

It catalyses the reaction N-terminal N-formyl-L-methionyl-[peptide] + H2O = N-terminal L-methionyl-[peptide] + formate. Its function is as follows. Removes the formyl group from the N-terminal Met of newly synthesized proteins. Requires at least a dipeptide for an efficient rate of reaction. N-terminal L-methionine is a prerequisite for activity but the enzyme has broad specificity at other positions. The protein is Peptide deformylase of Thermus thermophilus (strain ATCC BAA-163 / DSM 7039 / HB27).